The following is a 416-amino-acid chain: Glutamyl-tRNA reductase (416 aa).

Substrate-binding positions include 49 to 52 (TCNR), Ser105, 110 to 112 (EPQ), and Gln116. The active-site Nucleophile is the Cys50. Position 185 to 190 (185 to 190 (GAGETI)) interacts with NADP(+).

This sequence belongs to the glutamyl-tRNA reductase family. In terms of assembly, homodimer.

It carries out the reaction (S)-4-amino-5-oxopentanoate + tRNA(Glu) + NADP(+) = L-glutamyl-tRNA(Glu) + NADPH + H(+). It functions in the pathway porphyrin-containing compound metabolism; protoporphyrin-IX biosynthesis; 5-aminolevulinate from L-glutamyl-tRNA(Glu): step 1/2. Functionally, catalyzes the NADPH-dependent reduction of glutamyl-tRNA(Glu) to glutamate 1-semialdehyde (GSA). The sequence is that of Glutamyl-tRNA reductase from Shewanella halifaxensis (strain HAW-EB4).